A 143-amino-acid polypeptide reads, in one-letter code: FAD synthase (143 aa).

ATP is bound by residues 13–14 (TF), 18–21 (HPGH), and Asp96.

Belongs to the archaeal FAD synthase family. In terms of assembly, homodimer. A divalent metal cation is required as a cofactor.

The catalysed reaction is FMN + ATP + H(+) = FAD + diphosphate. Its pathway is cofactor biosynthesis; FAD biosynthesis; FAD from FMN: step 1/1. Catalyzes the transfer of the AMP portion of ATP to flavin mononucleotide (FMN) to produce flavin adenine dinucleotide (FAD) coenzyme. This chain is FAD synthase, found in Methanothrix thermoacetophila (strain DSM 6194 / JCM 14653 / NBRC 101360 / PT) (Methanosaeta thermophila).